The primary structure comprises 170 residues: Probable phospholipid hydroperoxide glutathione peroxidase (170 aa).

Cys-44 is an active-site residue.

This sequence belongs to the glutathione peroxidase family.

It is found in the cytoplasm. The enzyme catalyses a hydroperoxy polyunsaturated fatty acid + 2 glutathione = a hydroxy polyunsaturated fatty acid + glutathione disulfide + H2O. Functionally, protects cells and enzymes from oxidative damage, by catalyzing the reduction of hydrogen peroxide, lipid peroxides and organic hydroperoxide, by glutathione. This Mesembryanthemum crystallinum (Common ice plant) protein is Probable phospholipid hydroperoxide glutathione peroxidase (GPXMC1).